Here is a 324-residue protein sequence, read N- to C-terminus: Pepsin-2B (324 aa).

The Peptidase A1 domain maps to 14-321; the sequence is YYGVISIGTP…DRTNNKVGFA (308 aa). Aspartate 32 is an active-site residue. Cysteines 45 and 50 form a disulfide. Residues 86 to 109 are disordered; the sequence is QDTVSVGGGSDPNQELGESQTEPG. A compositionally biased stretch (polar residues) spans 96-107; that stretch reads DPNQELGESQTE. The cysteines at positions 206 and 209 are disulfide-linked. Aspartate 214 is a catalytic residue. The cysteines at positions 247 and 280 are disulfide-linked.

This sequence belongs to the peptidase A1 family.

This is Pepsin-2B from Gadus morhua (Atlantic cod).